The chain runs to 404 residues: Cysteine desulfurase IscS (404 aa).

Residues alanine 75–threonine 76, asparagine 155, glutamine 183, and serine 203–histidine 205 each bind pyridoxal 5'-phosphate. Lysine 206 bears the N6-(pyridoxal phosphate)lysine mark. Threonine 243 is a pyridoxal 5'-phosphate binding site. The Cysteine persulfide intermediate role is filled by cysteine 328. Residue cysteine 328 coordinates [2Fe-2S] cluster.

This sequence belongs to the class-V pyridoxal-phosphate-dependent aminotransferase family. NifS/IscS subfamily. Homodimer. Forms a heterotetramer with IscU, interacts with other sulfur acceptors. It depends on pyridoxal 5'-phosphate as a cofactor.

It is found in the cytoplasm. The catalysed reaction is (sulfur carrier)-H + L-cysteine = (sulfur carrier)-SH + L-alanine. Its pathway is cofactor biosynthesis; iron-sulfur cluster biosynthesis. Functionally, master enzyme that delivers sulfur to a number of partners involved in Fe-S cluster assembly, tRNA modification or cofactor biosynthesis. Catalyzes the removal of elemental sulfur and selenium atoms from cysteine and selenocysteine to produce alanine. Functions as a sulfur delivery protein for Fe-S cluster synthesis onto IscU, an Fe-S scaffold assembly protein, as well as other S acceptor proteins. Also functions as a selenium delivery protein in the pathway for the biosynthesis of selenophosphate. This Escherichia coli (strain K12 / DH10B) protein is Cysteine desulfurase IscS.